A 525-amino-acid polypeptide reads, in one-letter code: D-aminopeptidase (525 aa).

Ser62 serves as the catalytic Nucleophile. Lys65 functions as the Proton donor/acceptor in the catalytic mechanism. The interval 485-495 (PRALDHTAPGD) is important for specificity. Asp489 contacts substrate.

It belongs to the peptidase S12 family. Homodimer.

It carries out the reaction Release of an N-terminal D-amino acid from a peptide, Xaa-|-Yaa-, in which Xaa is preferably D-Ala, D-Ser or D-Thr. D-amino acid amides and methyl esters also are hydrolyzed, as is glycine amide.. Its activity is regulated as follows. Inhibited by beta-lactam compounds such as 6-aminopenicillic acid, 7-aminocephalosporanic acid, benzylpenicillin and ampicillin. Inhibited by p-chloromercuribenzoate. Its function is as follows. Hydrolyzes N-terminal residues in D-amino acid-containing peptides. The polypeptide is D-aminopeptidase (Gluconobacter oxydans (strain 621H) (Gluconobacter suboxydans)).